The chain runs to 658 residues: DNA mismatch repair protein MutL (658 aa).

Residues 114–130 show a composition bias toward basic and acidic residues; the sequence is RQEDSSHATQVKAEDGK. 2 disordered regions span residues 114–137 and 369–391; these read RQED…PTAA and DYPT…TAPM.

This sequence belongs to the DNA mismatch repair MutL/HexB family.

In terms of biological role, this protein is involved in the repair of mismatches in DNA. It is required for dam-dependent methyl-directed DNA mismatch repair. May act as a 'molecular matchmaker', a protein that promotes the formation of a stable complex between two or more DNA-binding proteins in an ATP-dependent manner without itself being part of a final effector complex. In Neisseria meningitidis serogroup C (strain 053442), this protein is DNA mismatch repair protein MutL.